A 376-amino-acid chain; its full sequence is Protein-arginine rhamnosyltransferase (376 aa).

DTDP-beta-L-rhamnose-binding positions include 13–16, Y192, 252–254, and 270–274; these read NYGD, MAQ, and RGEDS. 14–15 contacts dTDP; the sequence is YG. D16 acts as the Proton acceptor in catalysis. Residues Y192, 252 to 254, and 270 to 274 contribute to the dTDP site; these read MAQ and RGEDS. The active site involves E272.

This sequence belongs to the glycosyltransferase 104 family.

It carries out the reaction dTDP-beta-L-rhamnose + L-arginyl-[protein] = N(omega)-(alpha-L-rhamnosyl)-L-arginyl-[protein] + dTDP + H(+). Protein-arginine rhamnosyltransferase that catalyzes the transfer of a single rhamnose to elongation factor P (EF-P) on 'Lys-32', a modification required for EF-P-dependent rescue of polyproline stalled ribosomes. This is Protein-arginine rhamnosyltransferase from Pseudomonas aeruginosa (strain ATCC 15692 / DSM 22644 / CIP 104116 / JCM 14847 / LMG 12228 / 1C / PRS 101 / PAO1).